The sequence spans 118 residues: Large ribosomal subunit protein uL18 (118 aa).

Belongs to the universal ribosomal protein uL18 family. As to quaternary structure, part of the 50S ribosomal subunit; part of the 5S rRNA/L5/L18/L25 subcomplex. Contacts the 5S and 23S rRNAs.

Functionally, this is one of the proteins that bind and probably mediate the attachment of the 5S RNA into the large ribosomal subunit, where it forms part of the central protuberance. This Dichelobacter nodosus (strain VCS1703A) protein is Large ribosomal subunit protein uL18.